We begin with the raw amino-acid sequence, 332 residues long: Glycerol-3-phosphate dehydrogenase [NAD(P)+] (332 aa).

The NADPH site is built by Trp-11, Arg-30, and Lys-108. Sn-glycerol 3-phosphate is bound by residues Lys-108, Gly-137, and Ser-139. Ala-141 is a binding site for NADPH. Lys-192, Asp-245, Ser-255, Arg-256, and Asn-257 together coordinate sn-glycerol 3-phosphate. Lys-192 serves as the catalytic Proton acceptor. Arg-256 contacts NADPH. NADPH contacts are provided by Val-280 and Glu-282.

The protein belongs to the NAD-dependent glycerol-3-phosphate dehydrogenase family.

The protein resides in the cytoplasm. It catalyses the reaction sn-glycerol 3-phosphate + NAD(+) = dihydroxyacetone phosphate + NADH + H(+). The enzyme catalyses sn-glycerol 3-phosphate + NADP(+) = dihydroxyacetone phosphate + NADPH + H(+). Its pathway is membrane lipid metabolism; glycerophospholipid metabolism. Functionally, catalyzes the reduction of the glycolytic intermediate dihydroxyacetone phosphate (DHAP) to sn-glycerol 3-phosphate (G3P), the key precursor for phospholipid synthesis. This Burkholderia multivorans (strain ATCC 17616 / 249) protein is Glycerol-3-phosphate dehydrogenase [NAD(P)+].